We begin with the raw amino-acid sequence, 121 residues long: Large ribosomal subunit protein uL14c (121 aa).

It belongs to the universal ribosomal protein uL14 family. Part of the 50S ribosomal subunit.

It localises to the plastid. The protein resides in the chloroplast. Its function is as follows. Binds to 23S rRNA. This Tetradesmus obliquus (Green alga) protein is Large ribosomal subunit protein uL14c.